Consider the following 456-residue polypeptide: Protein trichome birefringence-like 25 (456 aa).

The helical; Signal-anchor for type II membrane protein transmembrane segment at 26–42 (QIFLKSVAFFLLIGLAY) threads the bilayer. Residues 172–174 (GDS) carry the GDS motif motif. The DCXHWCLPGXXDXWN motif signature appears at 426–440 (DCLHWCLPGPIDSWN).

Belongs to the PC-esterase family. TBL subfamily.

The protein resides in the membrane. Functionally, may be involved in the O-acetylation of mannan. May act as a bridging protein that binds pectin and other cell wall polysaccharides. Probably involved in maintaining esterification of pectins. In Arabidopsis thaliana (Mouse-ear cress), this protein is Protein trichome birefringence-like 25 (TBL25).